The chain runs to 110 residues: uncharacterized protein (110 aa).

The first 16 residues, 1–16 (MKKILLIASMTAGLTA), serve as a signal peptide directing secretion. Cys17 carries the N-palmitoyl cysteine lipid modification. Cys17 carries the S-diacylglycerol cysteine lipid modification.

The protein resides in the cell membrane. This is an uncharacterized protein from Salmonella typhimurium (strain LT2 / SGSC1412 / ATCC 700720).